Consider the following 115-residue polypeptide: Large ribosomal subunit protein bL19 (115 aa).

This sequence belongs to the bacterial ribosomal protein bL19 family.

In terms of biological role, this protein is located at the 30S-50S ribosomal subunit interface and may play a role in the structure and function of the aminoacyl-tRNA binding site. The protein is Large ribosomal subunit protein bL19 of Bacillus velezensis (strain DSM 23117 / BGSC 10A6 / LMG 26770 / FZB42) (Bacillus amyloliquefaciens subsp. plantarum).